A 717-amino-acid chain; its full sequence is SUN domain-containing protein 2 (717 aa).

Residues 1 to 66 (MSRRSQRLTR…PQLGPSSDAH (66 aa)) form a disordered region. An LMNA-binding region spans residues 1–139 (MSRRSQRLTR…SSSGYSSEDD (139 aa)). Residues 1-212 (MSRRSQRLTR…LTRRFSSLKT (212 aa)) lie on the Nuclear side of the membrane. Ser12 is subject to Phosphoserine. Over residues 19–32 (SSSSGGSSVAGSQS) the composition is skewed to low complexity. Phosphoserine occurs at positions 38 and 54. Thr107 is modified (phosphothreonine). Phosphoserine occurs at positions 110, 113, 116, and 136. A helical membrane pass occupies residues 213–233 (FLWFLLPLLLLTCLTYGAWYF). The Perinuclear space portion of the chain corresponds to 234 to 717 (YPYGLQTFHP…RFRVHGEPAH (484 aa)). 3 coiled-coil regions span residues 273 to 296 (EQRVMSRVHSLERRLEALAAEFSS), 348 to 440 (RRET…EEVG), and 475 to 506 (LLQREEMQAQLRELESKILTHVAEMQGKSARE). The segment at 507–717 (AAASLSLTLQ…RFRVHGEPAH (211 aa)) is sufficient for interaction with SYNE1 and SYNE2. Residues 555 to 716 (GASVISTRCS…YRFRVHGEPA (162 aa)) form the SUN domain. Cysteines 601 and 705 form a disulfide. Asn636 is a glycosylation site (N-linked (GlcNAc...) asparagine).

As to quaternary structure, core component of the LINC complex which is composed of inner nuclear membrane SUN domain-containing proteins coupled to outer nuclear membrane KASH domain-containing nesprins. SUN and KASH domain-containing proteins seem to bind each other promiscuously; however, differentially expression of LINC complex constituents is giving rise to specific assemblies. At least SUN1/2-containing core LINC complexes are proposed to be hexameric composed of three protomers of each KASH and SUN domain-containing protein. Interacts with SYNE2; the SUN2:SYNE2/KASH2 LINC complex is a heterohexamer; the homotrimeric cloverleave-like conformation of the SUN domain is a prerequisite for LINC complex formation in which three separate SYNE2/KASH2 peptides bind at the interface of adjacent SUN domains. Component of a probable SUN2:KASH5 LINC complex. Interacts with SYNE1 and SYNE3; probably forming respective LINC complexes. Interacts with A-type lamin. Interaction with lamins B1 and C is hardly detectable. Interacts with EMD and RAB5A. Interacts with TMEM43. Interacts with TMEM201. The disulfide bond with SYNE2 is required for stability of the SUN2:SYNE2/KASH2 LINC complex under tensile forces though not required for the interaction. The disulfide bond is proposed to be conserved in LINC complexes involved in force transmission. As to expression, widely expressed. Highly expressed in heart, lung and muscle. Weakly expressed in fetal heart. Slightly overexpressed in some heart tissues form patients with congenital heart defects.

Its subcellular location is the nucleus inner membrane. The protein resides in the nucleus envelope. It localises to the endosome membrane. Functionally, as a component of the LINC (LInker of Nucleoskeleton and Cytoskeleton) complex, involved in the connection between the nuclear lamina and the cytoskeleton. The nucleocytoplasmic interactions established by the LINC complex play an important role in the transmission of mechanical forces across the nuclear envelope and in nuclear movement and positioning. Specifically, SYNE2 and SUN2 assemble in arrays of transmembrane actin-associated nuclear (TAN) lines which are bound to F-actin cables and couple the nucleus to retrograde actin flow during actin-dependent nuclear movement. Required for interkinetic nuclear migration (INM) and essential for nucleokinesis and centrosome-nucleus coupling during radial neuronal migration in the cerebral cortex and during glial migration. Required for nuclear migration in retinal photoreceptor progenitors implicating association with cytoplasmic dynein-dynactin and kinesin motor complexes, and probably B-type lamins; SUN1 and SUN2 seem to act redundantly. The SUN1/2:KASH5 LINC complex couples telomeres to microtubules during meiosis; SUN1 and SUN2 seem to act at least partial redundantly. Anchors chromosome movement in the prophase of meiosis and is involved in selective gene expression of coding and non-coding RNAs needed for gametogenesis. Required for telomere attachment to nuclear envelope and gametogenesis. May also function on endocytic vesicles as a receptor for RAB5-GDP and participate in the activation of RAB5. This is SUN domain-containing protein 2 from Homo sapiens (Human).